The primary structure comprises 317 residues: MVRENKAAWKAQYFLKVVELFDEYPKCFIVGADNVGSKQMQNIRTSLRGLGVVLMGKNTMMRKAIRGHLENNAQLEKLLPHIKGNVGFVFTKGDLAEVRDKLLESKVRAPARAGAIAPLPVIIPAQNTGLGPEKTSFFQALSIPTKISKGTIEIINDVPILKPGDKVGASEATLLNMLNISPFSYGLAITQVYDSGSIFSPEILDIKPEDLRAKFQAGVANLAAVSLQIGYPTIASAPHSIANGFKNLLAIAASTEVEFKQAATIKEFIKDPSKFVAAAAASAPAAGAGAAAEKKEEAKKEESESEEDDDMGFGLFD.

The disordered stretch occupies residues 286–317; the sequence is AGAGAAAEKKEEAKKEESESEEDDDMGFGLFD. The span at 292 to 302 shows a compositional bias: basic and acidic residues; sequence AEKKEEAKKEE.

Belongs to the universal ribosomal protein uL10 family. P0 forms a pentameric complex by interaction with dimers of P1 and P2. Phosphorylated.

Functionally, ribosomal protein P0 is the functional equivalent of E.coli protein L10. In Ceratitis capitata (Mediterranean fruit fly), this protein is Large ribosomal subunit protein uL10 (RpLP0).